The following is a 252-amino-acid chain: Phosphate import ATP-binding protein PstB 1 (252 aa).

One can recognise an ABC transporter domain in the interval 6–247; that stretch reads LQVSDLSVYY…PQHKETEDYI (242 aa). 38-45 lines the ATP pocket; that stretch reads GPSGSGKS.

This sequence belongs to the ABC transporter superfamily. Phosphate importer (TC 3.A.1.7) family. In terms of assembly, the complex is composed of two ATP-binding proteins (PstB), two transmembrane proteins (PstC and PstA) and a solute-binding protein (PstS).

Its subcellular location is the cell membrane. It catalyses the reaction phosphate(out) + ATP + H2O = ADP + 2 phosphate(in) + H(+). Functionally, part of the ABC transporter complex PstSACB involved in phosphate import. Responsible for energy coupling to the transport system. The sequence is that of Phosphate import ATP-binding protein PstB 1 from Streptococcus pneumoniae (strain ATCC BAA-255 / R6).